Here is a 164-residue protein sequence, read N- to C-terminus: UPF0114 protein Spro_2386 (164 aa).

3 consecutive transmembrane segments (helical) span residues 15–35, 53–73, and 136–156; these read LLAPVYFGLSLALLALSIKFF, LVLTLLSLIDMALVGGLLVMV, and LMWYVIIHLTFVLSAFVMGYL.

This sequence belongs to the UPF0114 family.

It is found in the cell membrane. This Serratia proteamaculans (strain 568) protein is UPF0114 protein Spro_2386.